Reading from the N-terminus, the 198-residue chain is Ribonuclease HII (198 aa).

Residues 3 to 198 (FLEGGVDEAG…SWRTLRGESP (196 aa)) form the RNase H type-2 domain. 3 residues coordinate a divalent metal cation: Asp-9, Glu-10, and Asp-104.

This sequence belongs to the RNase HII family. It depends on Mn(2+) as a cofactor. Mg(2+) serves as cofactor.

It is found in the cytoplasm. It carries out the reaction Endonucleolytic cleavage to 5'-phosphomonoester.. Endonuclease that specifically degrades the RNA of RNA-DNA hybrids. In Pyrobaculum neutrophilum (strain DSM 2338 / JCM 9278 / NBRC 100436 / V24Sta) (Thermoproteus neutrophilus), this protein is Ribonuclease HII.